We begin with the raw amino-acid sequence, 1297 residues long: Phosphoribosylformylglycinamidine synthase (1297 aa).

Residues 303–329 (ISPFPGAATGSGGEIRDEGATGRGAKP) are disordered. Residue 308–319 (GAATGSGGEIRD) coordinates ATP. Aspartate 680, glutamate 719, asparagine 723, and aspartate 887 together coordinate Mg(2+). Serine 889 provides a ligand contact to ATP. The 253-residue stretch at 1045–1297 (IAILREQGVN…RLFRNARMVF (253 aa)) folds into the Glutamine amidotransferase type-1 domain. Cysteine 1138 acts as the Nucleophile in catalysis. Active-site residues include histidine 1263 and glutamate 1265.

The protein in the N-terminal section; belongs to the FGAMS family. Monomer.

Its subcellular location is the cytoplasm. The catalysed reaction is N(2)-formyl-N(1)-(5-phospho-beta-D-ribosyl)glycinamide + L-glutamine + ATP + H2O = 2-formamido-N(1)-(5-O-phospho-beta-D-ribosyl)acetamidine + L-glutamate + ADP + phosphate + H(+). It functions in the pathway purine metabolism; IMP biosynthesis via de novo pathway; 5-amino-1-(5-phospho-D-ribosyl)imidazole from N(2)-formyl-N(1)-(5-phospho-D-ribosyl)glycinamide: step 1/2. Phosphoribosylformylglycinamidine synthase involved in the purines biosynthetic pathway. Catalyzes the ATP-dependent conversion of formylglycinamide ribonucleotide (FGAR) and glutamine to yield formylglycinamidine ribonucleotide (FGAM) and glutamate. The sequence is that of Phosphoribosylformylglycinamidine synthase from Haemophilus influenzae (strain 86-028NP).